An 887-amino-acid chain; its full sequence is Pyruvate dehydrogenase E1 component (887 aa).

As to quaternary structure, homodimer. Part of the PDH complex, consisting of multiple copies of pyruvate dehydrogenase (E1), dihydrolipoamide acetyltransferase (E2) and lipoamide dehydrogenase (E3). Thiamine diphosphate is required as a cofactor.

The catalysed reaction is N(6)-[(R)-lipoyl]-L-lysyl-[protein] + pyruvate + H(+) = N(6)-[(R)-S(8)-acetyldihydrolipoyl]-L-lysyl-[protein] + CO2. Its function is as follows. Component of the pyruvate dehydrogenase (PDH) complex, that catalyzes the overall conversion of pyruvate to acetyl-CoA and CO(2). This Buchnera aphidicola subsp. Acyrthosiphon pisum (strain APS) (Acyrthosiphon pisum symbiotic bacterium) protein is Pyruvate dehydrogenase E1 component (aceE).